Consider the following 263-residue polypeptide: Phosphoinositide-3-kinase-interacting protein 1 (263 aa).

An N-terminal signal peptide occupies residues 1–18; sequence MFGRLYFMLLLSVGLVDC. Residues 19–163 lie on the Extracellular side of the membrane; the sequence is LSVVKDCITN…SGPKKKKDLG (145 aa). In terms of domain architecture, Kringle spans 24–99; that stretch reads DCITNNGEDY…KKEACDIRIC (76 aa). 3 cysteine pairs are disulfide-bonded: C25-C99, C46-C80, and C69-C94. The N-linked (GlcNAc...) asparagine glycan is linked to N103. Residues 164–184 form a helical membrane-spanning segment; it reads TLGYVLAVFMMAIIILLGGGI. The Cytoplasmic portion of the chain corresponds to 185–263; the sequence is TMGYFYKRGR…LMGSAGTPGA (79 aa). Residues 239 to 263 are disordered; the sequence is NNQTPTQEPVEGADPLMGSAGTPGA.

The protein localises to the cell membrane. In terms of biological role, negative regulator of hepatic phosphatidylinositol 3-kinase (PI3K) activity. The polypeptide is Phosphoinositide-3-kinase-interacting protein 1 (pik3ip1) (Danio rerio (Zebrafish)).